Reading from the N-terminus, the 611-residue chain is Phosphatidylinositol 3,4,5-trisphosphate 3-phosphatase and protein-tyrosine-phosphatase PTEN2A (611 aa).

Disordered stretches follow at residues 1-42 (MSSE…GVAS) and 87-109 (GIRL…SSAT). S91 carries the phosphoserine modification. A compositionally biased stretch (low complexity) spans 100 to 109 (TTTEGTSSAT). Residues 145–324 (RRYQEGGFDL…KYFERILTYF (180 aa)) form the Phosphatase tensin-type domain. C263 functions as the Phosphocysteine intermediate in the catalytic mechanism. A C2 tensin-type domain is found at 331-458 (GRRCMLRGFR…FMVEVVLADI (128 aa)). A compositionally biased stretch (polar residues) spans 462–486 (IPTNPSSETASKTPEETSAANSSPV). Residues 462–589 (IPTNPSSETA…VNASSSSESE (128 aa)) form a disordered region. The span at 495–507 (PDKETENPDKDDV) shows a compositional bias: basic and acidic residues. The residue at position 509 (S509) is a Phosphoserine. Polar residues-rich tracts occupy residues 514–530 (DSTG…SQTP) and 549–565 (VSIS…QGVT).

The protein belongs to the PTEN phosphatase protein family. Expressed in seedlings, roots, stems, leaves, flowers and siliques. However, at protein level, not observed in older leaves and mature siliques.

It catalyses the reaction O-phospho-L-tyrosyl-[protein] + H2O = L-tyrosyl-[protein] + phosphate. The catalysed reaction is a 1,2-diacyl-sn-glycero-3-phospho-(1D-myo-inositol-3,4,5-trisphosphate) + H2O = a 1,2-diacyl-sn-glycero-3-phospho-(1D-myo-inositol-4,5-bisphosphate) + phosphate. Binds phosphatidic acid. Protein tyrosine phosphatase that also exhibits lipid phosphatase activity. Hydrolyzed poorly p-nitrophenyl phosphate (p-NPP). Can use PtdIns isomers as substrates. Removes efficiently phosphate from the D3 position of the inositol ring, less from the D4 position and not at all from the D5 position on monophosphorylated PtdIns isomers (PIPs). The presence of a phosphate group in the D5 position on PIP(2) isomers reduces lipid phosphatase activity. Mostly active on PtdIns(3)P and PtdIns(3,4)P(2), to a lower extent, on PtdIns(4)P and PtdIns(3,5)P(2), but barely against PtdIns(3,4,5)P(3) as substrate. In Arabidopsis thaliana (Mouse-ear cress), this protein is Phosphatidylinositol 3,4,5-trisphosphate 3-phosphatase and protein-tyrosine-phosphatase PTEN2A.